The primary structure comprises 231 residues: Ion-translocating oxidoreductase complex subunit E (231 aa).

A run of 6 helical transmembrane segments spans residues 18–38 (ALVQ…ATNA), 39–59 (LGLG…ISTL), 63–83 (TPAE…VSAV), 86–106 (LINA…PLIV), 125–145 (ALSA…MFVL), and 182–202 (PFLL…MLAG).

The protein belongs to the NqrDE/RnfAE family. The complex is composed of six subunits: RsxA, RsxB, RsxC, RsxD, RsxE and RsxG.

Its subcellular location is the cell inner membrane. Its function is as follows. Part of a membrane-bound complex that couples electron transfer with translocation of ions across the membrane. Required to maintain the reduced state of SoxR. This chain is Ion-translocating oxidoreductase complex subunit E, found in Shigella flexneri serotype 5b (strain 8401).